The primary structure comprises 141 residues: Hemoglobin subunit alpha-A (141 aa).

The Globin domain maps to 1–141 (VLSGPDKTNV…VGAVLTAKYR (141 aa)). H58 serves as a coordination point for O2. H87 is a binding site for heme b.

It belongs to the globin family. As to quaternary structure, heterotetramer of two alpha chains and two beta chains. In terms of tissue distribution, red blood cells.

In terms of biological role, involved in oxygen transport from the lung to the various peripheral tissues. This chain is Hemoglobin subunit alpha-A (HBAA), found in Rhea americana (Greater rhea).